Here is a 120-residue protein sequence, read N- to C-terminus: Immunoglobulin lambda variable 4-60 (120 aa).

The first 21 residues, 1-21, serve as a signal peptide directing secretion; sequence MAWTPLLLLFPLLLHCTGSLS. A framework-1 region spans residues 22–46; the sequence is QPVLTQSSSASASLGSSVKLTCTLS. The Ig-like domain occupies 23 to 120; that stretch reads PVLTQSSSAS…YYCETWDSNT (98 aa). Residues Cys-43 and Cys-113 are joined by a disulfide bond. A complementarity-determining-1 region spans residues 47–53; sequence SGHSSYI. The tract at residues 54–70 is framework-2; sequence IAWHQQQPGKAPRYLMK. Residues 71 to 77 are complementarity-determining-2; sequence LEGSGSY. The framework-3 stretch occupies residues 78–113; that stretch reads NKGSGVPDRFSGSSSGADRYLTISNLQFEDEADYYC. Positions 114–120 are complementarity-determining-3; sequence ETWDSNT.

Immunoglobulins are composed of two identical heavy chains and two identical light chains; disulfide-linked.

It localises to the secreted. Its subcellular location is the cell membrane. V region of the variable domain of immunoglobulin light chains that participates in the antigen recognition. Immunoglobulins, also known as antibodies, are membrane-bound or secreted glycoproteins produced by B lymphocytes. In the recognition phase of humoral immunity, the membrane-bound immunoglobulins serve as receptors which, upon binding of a specific antigen, trigger the clonal expansion and differentiation of B lymphocytes into immunoglobulins-secreting plasma cells. Secreted immunoglobulins mediate the effector phase of humoral immunity, which results in the elimination of bound antigens. The antigen binding site is formed by the variable domain of one heavy chain, together with that of its associated light chain. Thus, each immunoglobulin has two antigen binding sites with remarkable affinity for a particular antigen. The variable domains are assembled by a process called V-(D)-J rearrangement and can then be subjected to somatic hypermutations which, after exposure to antigen and selection, allow affinity maturation for a particular antigen. This chain is Immunoglobulin lambda variable 4-60, found in Homo sapiens (Human).